Here is a 260-residue protein sequence, read N- to C-terminus: NH(3)-dependent NAD(+) synthetase (260 aa).

Gly31–Ser38 contributes to the ATP binding site. Residue Asp37 participates in Mg(2+) binding. Arg112 contributes to the deamido-NAD(+) binding site. Thr132 lines the ATP pocket. A Mg(2+)-binding site is contributed by Glu137. 2 residues coordinate ATP: Lys161 and Ser183.

It belongs to the NAD synthetase family. As to quaternary structure, homodimer.

The catalysed reaction is deamido-NAD(+) + NH4(+) + ATP = AMP + diphosphate + NAD(+) + H(+). It participates in cofactor biosynthesis; NAD(+) biosynthesis; NAD(+) from deamido-NAD(+) (ammonia route): step 1/1. Catalyzes the ATP-dependent amidation of deamido-NAD to form NAD. Uses ammonia as a nitrogen source. The protein is NH(3)-dependent NAD(+) synthetase of Helicobacter pylori (strain G27).